Here is a 102-residue protein sequence, read N- to C-terminus: NADH-quinone oxidoreductase subunit K (102 aa).

3 consecutive transmembrane segments (helical) span residues 5–25 (LAHY…GIFL), 31–51 (IILL…FVAF), and 62–82 (VFVF…LAIL).

The protein belongs to the complex I subunit 4L family. In terms of assembly, NDH-1 is composed of 14 different subunits. Subunits NuoA, H, J, K, L, M, N constitute the membrane sector of the complex.

It localises to the cell inner membrane. The enzyme catalyses a quinone + NADH + 5 H(+)(in) = a quinol + NAD(+) + 4 H(+)(out). Its function is as follows. NDH-1 shuttles electrons from NADH, via FMN and iron-sulfur (Fe-S) centers, to quinones in the respiratory chain. The immediate electron acceptor for the enzyme in this species is believed to be ubiquinone. Couples the redox reaction to proton translocation (for every two electrons transferred, four hydrogen ions are translocated across the cytoplasmic membrane), and thus conserves the redox energy in a proton gradient. The chain is NADH-quinone oxidoreductase subunit K from Bordetella parapertussis (strain 12822 / ATCC BAA-587 / NCTC 13253).